Here is a 116-residue protein sequence, read N- to C-terminus: Nitrogenase-stabilizing/protective protein NifW (116 aa).

It belongs to the NifW family. In terms of assembly, homotrimer; associates with NifD.

Functionally, may protect the nitrogenase Fe-Mo protein from oxidative damage. The chain is Nitrogenase-stabilizing/protective protein NifW from Rhodopseudomonas palustris (strain TIE-1).